The sequence spans 122 residues: Large ribosomal subunit protein uL18 (122 aa).

It belongs to the universal ribosomal protein uL18 family. Part of the 50S ribosomal subunit; part of the 5S rRNA/L5/L18/L25 subcomplex. Contacts the 5S and 23S rRNAs.

Functionally, this is one of the proteins that bind and probably mediate the attachment of the 5S RNA into the large ribosomal subunit, where it forms part of the central protuberance. This is Large ribosomal subunit protein uL18 from Thermotoga neapolitana (strain ATCC 49049 / DSM 4359 / NBRC 107923 / NS-E).